Consider the following 364-residue polypeptide: Ribosomal RNA large subunit methyltransferase F (364 aa).

The disordered stretch occupies residues 1–52 (MPKPAIKTAAKLAMSSAGKRGKPSTPKSLAKPQTTKPKTASKLKAKHGEQKR). Positions 25-38 (TPKSLAKPQTTKPK) are enriched in polar residues.

It belongs to the methyltransferase superfamily. METTL16/RlmF family.

The protein resides in the cytoplasm. The enzyme catalyses adenosine(1618) in 23S rRNA + S-adenosyl-L-methionine = N(6)-methyladenosine(1618) in 23S rRNA + S-adenosyl-L-homocysteine + H(+). Its function is as follows. Specifically methylates the adenine in position 1618 of 23S rRNA. The chain is Ribosomal RNA large subunit methyltransferase F from Shewanella sp. (strain ANA-3).